The sequence spans 267 residues: Large ribosomal subunit protein mL57 (267 aa).

A compositionally biased stretch (low complexity) spans 43–54 (SSSAVQQEQDAS). The disordered stretch occupies residues 43-73 (SSSAVQQEQDASGTSSSQQPRPRWSYTPERM).

It belongs to the ribonuclease III family. Mitochondrion-specific ribosomal protein mL57 subfamily. In terms of assembly, component of the mitochondrial large ribosomal subunit (mt-LSU). Mature N.crassa 74S mitochondrial ribosomes consist of a small (37S) and a large (54S) subunit. The 37S small subunit contains a 16S ribosomal RNA (16S mt-rRNA) and 32 different proteins. The 54S large subunit contains a 23S rRNA (23S mt-rRNA) and 42 different proteins. mL57 forms a heterodimer with mL44 and stabilizes rRNA expansion segments 1/2 at a membrane-facing protuberance close to the point of attachment of the ribosome to the translocon in the membrane.

It localises to the mitochondrion. Its function is as follows. Component of the mitochondrial ribosome (mitoribosome), a dedicated translation machinery responsible for the synthesis of mitochondrial genome-encoded proteins, including at least some of the essential transmembrane subunits of the mitochondrial respiratory chain. The mitoribosomes are attached to the mitochondrial inner membrane and translation products are cotranslationally integrated into the membrane. This chain is Large ribosomal subunit protein mL57 (mrpl15), found in Neurospora crassa (strain ATCC 24698 / 74-OR23-1A / CBS 708.71 / DSM 1257 / FGSC 987).